The sequence spans 389 residues: ELAV-like protein 2 (389 aa).

RRM domains follow at residues 66–145, 153–233, and 306–384; these read TNLI…YARP, ANLY…FANN, and WCIF…FKTS.

This sequence belongs to the RRM elav family. As to quaternary structure, part of a ribonucleoprotein (RNP) complex, at least composed of elavl1/elrA and/or elavl2/elrB, igf2bp3/vg1RBP, ddx6/Xp54, ybx2/frgy2, lsm14b/rap55b and, in a subset of RNP complexes, stau1/staufen. Binds RNA as a homooligomer. In terms of tissue distribution, expressed in brain, testis and ovary. Ovarian expression is restricted to follicle cells surrounding the oocyte. From the early tailbud stage, expression is neural-specific and is seen in both the central and peripheral nervous system in differentiating neurons but not proliferating precursors. Expressed in the retina from stage 32 with expression becoming restricted to the ganglion cell layer by later stages.

The protein resides in the cytoplasm. It localises to the cell cortex. In terms of biological role, binds to poly-U elements and AU-rich elements (AREs) in the 3'-UTR of target mRNAs. Required for the vegetal localization of vg1 mRNA. Probably required for nervous system development. In Xenopus laevis (African clawed frog), this protein is ELAV-like protein 2 (elavl2).